A 65-amino-acid polypeptide reads, in one-letter code: SPbeta prophage-derived uncharacterized protein YorO (65 aa).

The chain is SPbeta prophage-derived uncharacterized protein YorO (yorO) from Bacillus subtilis (strain 168).